The sequence spans 65 residues: Large ribosomal subunit protein bL35 (65 aa).

A disordered region spans residues 1 to 46; that stretch reads MPKMKTRQSAAKRYEVTGSGKLRRRRAGKNHLLQHKSAARKRSLST. Residues 21–44 are compositionally biased toward basic residues; the sequence is KLRRRRAGKNHLLQHKSAARKRSL.

The protein belongs to the bacterial ribosomal protein bL35 family.

The chain is Large ribosomal subunit protein bL35 from Gloeobacter violaceus (strain ATCC 29082 / PCC 7421).